The chain runs to 489 residues: 3-octaprenyl-4-hydroxybenzoate carboxy-lyase (489 aa).

Asn172 is a binding site for Mn(2+). Prenylated FMN is bound by residues 175-177, 189-191, and 194-195; these read IYR, RWL, and RG. Residue Glu238 coordinates Mn(2+). Asp287 (proton donor) is an active-site residue.

This sequence belongs to the UbiD family. As to quaternary structure, homohexamer. Requires prenylated FMN as cofactor. Mn(2+) is required as a cofactor.

It localises to the cell membrane. It carries out the reaction a 4-hydroxy-3-(all-trans-polyprenyl)benzoate + H(+) = a 2-(all-trans-polyprenyl)phenol + CO2. Its pathway is cofactor biosynthesis; ubiquinone biosynthesis. Its function is as follows. Catalyzes the decarboxylation of 3-octaprenyl-4-hydroxy benzoate to 2-octaprenylphenol, an intermediate step in ubiquinone biosynthesis. The protein is 3-octaprenyl-4-hydroxybenzoate carboxy-lyase of Glaesserella parasuis serovar 5 (strain SH0165) (Haemophilus parasuis).